The sequence spans 261 residues: Indole-3-glycerol phosphate synthase (261 aa).

This sequence belongs to the TrpC family.

It carries out the reaction 1-(2-carboxyphenylamino)-1-deoxy-D-ribulose 5-phosphate + H(+) = (1S,2R)-1-C-(indol-3-yl)glycerol 3-phosphate + CO2 + H2O. The protein operates within amino-acid biosynthesis; L-tryptophan biosynthesis; L-tryptophan from chorismate: step 4/5. This chain is Indole-3-glycerol phosphate synthase, found in Campylobacter curvus (strain 525.92).